An 858-amino-acid polypeptide reads, in one-letter code: MSASVAEPPPALSRKAEFKAAKAELLARFKSANHVTPLMHALSRATDDALRSLWQECGLPATLALVAVGGFGRGELSPHSDVDILVLLPDAHASELDERIERFIGMAWDLGLEIGSSVRTVDQCIEEASHDVTVQTSLLEARRIVGSTALFERFMLRYREALDARAFFQAKVLEMRQRHAKFQDTPYSLEPNVKESPGGLRDLQTILWIARAAGFGSSWRELDTRGLITDREARELRRNEGFLKTLRARLHVIAGRRQDILVFDLQTQAAESFGYQPTSAKRASEQLMRRYYWAAKAVTQLATILIQNIEAQLFPATSGVTRVLSPGRFVEKQGMLEIAADDVFERHPDAILEAFLLYEATRGVKGLSARTLRALYNSRDVMNNAWRRDPRNRRTFMQILQQPEGITHAFRLMNQTSVLGRYLLNFRRIVGQMQHDLYHVYTVDQHILMVLRNIRRFAVAEHAHEYPFCSQLIVNFERPWVLYVAALFHDIAKGRGGDHSALGMADARRFCREHGIEGDDAALVVWLVQHHLTMSQVAQKQDTSDPVVIKRFAELVGSERRLTALYLLTVADIRGTSPKVWNTWKGKLLEDLYRATLAVLGGAQPDAHSELKTRQEEALALLRLETVPPDAHRALWDQLDVGYFLRHDAADIAWQTRVLYRHVAADTAIVRARPSPVGDALQVLVYVKDRSDLFAGICAYFDRNGLSVLDARVNTTRHGYALDNFIVTQTEHDVQYRDIANLVEQQLAARLAESAPLPEPSKGRLSRLSRTFPITPRVDLRADERGQYYILSVSANDRPGLLYSIARVLAEHRVGVHAARINTLGERVEDVFMLDGTGLSDNRLQIQVETELLRAIAV.

Positions 1-324 (MSASVAEPPP…PATSGVTRVL (324 aa)) are uridylyltransferase. Positions 325–681 (SPGRFVEKQG…ARPSPVGDAL (357 aa)) are uridylyl-removing. In terms of domain architecture, HD spans 443–565 (VDQHILMVLR…VGSERRLTAL (123 aa)). ACT domains follow at residues 682–761 (QVLV…PEPS) and 790–858 (ILSV…AIAV).

Belongs to the GlnD family. Requires Mg(2+) as cofactor.

It catalyses the reaction [protein-PII]-L-tyrosine + UTP = [protein-PII]-uridylyl-L-tyrosine + diphosphate. The enzyme catalyses [protein-PII]-uridylyl-L-tyrosine + H2O = [protein-PII]-L-tyrosine + UMP + H(+). Its activity is regulated as follows. Uridylyltransferase (UTase) activity is inhibited by glutamine, while glutamine activates uridylyl-removing (UR) activity. Modifies, by uridylylation and deuridylylation, the PII regulatory proteins (GlnB and homologs), in response to the nitrogen status of the cell that GlnD senses through the glutamine level. Under low glutamine levels, catalyzes the conversion of the PII proteins and UTP to PII-UMP and PPi, while under higher glutamine levels, GlnD hydrolyzes PII-UMP to PII and UMP (deuridylylation). Thus, controls uridylylation state and activity of the PII proteins, and plays an important role in the regulation of nitrogen assimilation and metabolism. The sequence is that of Bifunctional uridylyltransferase/uridylyl-removing enzyme from Burkholderia pseudomallei (strain 1106a).